Reading from the N-terminus, the 177-residue chain is Dual-action ribosomal maturation protein DarP (177 aa).

It belongs to the DarP family.

It localises to the cytoplasm. Functionally, member of a network of 50S ribosomal subunit biogenesis factors which assembles along the 30S-50S interface, preventing incorrect 23S rRNA structures from forming. Promotes peptidyl transferase center (PTC) maturation. This is Dual-action ribosomal maturation protein DarP from Histophilus somni (strain 129Pt) (Haemophilus somnus).